Here is a 393-residue protein sequence, read N- to C-terminus: NAD(P)H-quinone oxidoreductase subunit H, chloroplastic (393 aa).

Belongs to the complex I 49 kDa subunit family. NDH is composed of at least 16 different subunits, 5 of which are encoded in the nucleus.

It is found in the plastid. The protein localises to the chloroplast thylakoid membrane. The enzyme catalyses a plastoquinone + NADH + (n+1) H(+)(in) = a plastoquinol + NAD(+) + n H(+)(out). It catalyses the reaction a plastoquinone + NADPH + (n+1) H(+)(in) = a plastoquinol + NADP(+) + n H(+)(out). In terms of biological role, NDH shuttles electrons from NAD(P)H:plastoquinone, via FMN and iron-sulfur (Fe-S) centers, to quinones in the photosynthetic chain and possibly in a chloroplast respiratory chain. The immediate electron acceptor for the enzyme in this species is believed to be plastoquinone. Couples the redox reaction to proton translocation, and thus conserves the redox energy in a proton gradient. In Brachypodium distachyon (Purple false brome), this protein is NAD(P)H-quinone oxidoreductase subunit H, chloroplastic.